A 310-amino-acid chain; its full sequence is Aspartate carbamoyltransferase catalytic subunit (310 aa).

Carbamoyl phosphate-binding residues include Arg55 and Thr56. Lys85 lines the L-aspartate pocket. Arg106, His135, and Gln138 together coordinate carbamoyl phosphate. L-aspartate is bound by residues Arg168 and Arg230. Carbamoyl phosphate is bound by residues Leu268 and Pro269.

Belongs to the aspartate/ornithine carbamoyltransferase superfamily. ATCase family. As to quaternary structure, heterododecamer (2C3:3R2) of six catalytic PyrB chains organized as two trimers (C3), and six regulatory PyrI chains organized as three dimers (R2).

It catalyses the reaction carbamoyl phosphate + L-aspartate = N-carbamoyl-L-aspartate + phosphate + H(+). It participates in pyrimidine metabolism; UMP biosynthesis via de novo pathway; (S)-dihydroorotate from bicarbonate: step 2/3. Its function is as follows. Catalyzes the condensation of carbamoyl phosphate and aspartate to form carbamoyl aspartate and inorganic phosphate, the committed step in the de novo pyrimidine nucleotide biosynthesis pathway. This chain is Aspartate carbamoyltransferase catalytic subunit, found in Buchnera aphidicola subsp. Acyrthosiphon pisum (strain APS) (Acyrthosiphon pisum symbiotic bacterium).